The chain runs to 371 residues: T-cell acute lymphocytic leukemia protein 1 (371 aa).

Residues 1–71 (MMEKRQPELC…DVPLQNSSNG (71 aa)) form a disordered region. A compositionally biased stretch (basic and acidic residues) spans 34–57 (GCKEDEESKREEGDKEGGGRFKGD). In terms of domain architecture, bHLH spans 204 to 256 (VRRIFTNSRERWRQQNVNGAFAELRKLIPTHPPDKKLSKNEILRLAMKYISFL). Residues 263–371 (QDGGRNVSST…GRPLDGSSRR (109 aa)) form a disordered region. The span at 293-305 (HQDRVVGLARDDI) shows a compositional bias: basic and acidic residues. The segment covering 321–335 (GDADGSPESFMEDQD) has biased composition (acidic residues).

In terms of tissue distribution, expressed in the main hemopoietic organs in adults, namely the kidney and the spleen. Also expressed in the liver, brain, gill and gonads.

It is found in the nucleus. Its function is as follows. Transcription factor that plays a pivotal role in hemopoietic and endothelial development. This is T-cell acute lymphocytic leukemia protein 1 from Takifugu rubripes (Japanese pufferfish).